Consider the following 1346-residue polypeptide: Zinc finger protein 541 (1346 aa).

Disordered stretches follow at residues Met-1 to Asn-34 and Glu-113 to Gln-136. Polar residues predominate over residues Phe-21 to Thr-32. 3 C2H2-type zinc fingers span residues Leu-140 to His-162, His-168 to His-190, and Phe-196 to His-220. 4 disordered regions span residues Ala-235–His-271, Val-283–Ala-328, Ser-437–Leu-472, and Ser-578–Arg-744. Low complexity-rich tracts occupy residues Pro-294–Pro-323 and Pro-440–Glu-458. Polar residues predominate over residues Pro-671–Gly-685. A C2H2-type 4 zinc finger spans residues Phe-838–His-860. The segment at Ala-931–Gln-971 is disordered. A compositionally biased stretch (basic and acidic residues) spans Gln-934–Gln-948. Positions Pro-1053 to Gly-1145 constitute an ELM2 domain. Positions Thr-1160–Lys-1211 constitute an SANT domain. Positions Val-1224–Gly-1281 are disordered. The segment covering Thr-1234–Ser-1247 has biased composition (basic and acidic residues). The span at His-1248–Ser-1258 shows a compositional bias: basic residues. The span at Ile-1264–Ser-1273 shows a compositional bias: polar residues. The segment at Phe-1289 to His-1311 adopts a C2H2-type 5 zinc-finger fold.

Interacts with DNTTIP1. Identified in a complex with KCDT19, HDAC1 and HSPA2. Component of a histone deacetylase complex containing DNTTIP1, ZNF541, HDAC1 and HDAC2. Identified in a complex with HDAC1, HDAC2, DNTTIP1 and KCTD19.

It localises to the nucleus. Its function is as follows. Transcription regulator which is essential for male fertility and for the completion of meiotic prophase in spermatocytes. Regulates progression of the pachytene stage of meiotic prophase by activating the expression of genes involved in meiosis during spermatogenesis. Maintains the repression of pre-pachytene transcriptional programs, including meiotic double-strand breaks (DSB) formation genes in pachytene spermatocytes and suppresses aberrant DSB formation after mid-pachytene, thus ensuring meiosis progression. The protein is Zinc finger protein 541 (ZNF541) of Homo sapiens (Human).